An 807-amino-acid polypeptide reads, in one-letter code: Mechanosensitive cation channel TMEM63A (807 aa).

At 1-51 the chain is on the extracellular side; it reads MMDSPFLELWQSKAVSIREQLGLGDRPNDSYCYNSAKNSTVLQGVTFGGIP. An N-linked (GlcNAc...) asparagine glycan is attached at N38. Residues 52–74 form a helical membrane-spanning segment; sequence TVLLIDVSCFLFLILVFSIIRRR. The Cytoplasmic portion of the chain corresponds to 75–134; that stretch reads FWDYGRIALVSEADSESRFQRLSSTSSSGQQDFENELGCCPWLTAIFRLHDDQILEWCGE. Residues 135–167 traverse the membrane as a helical segment; that stretch reads DAIHYLSFQRHIIFLLVVVSFLSLCVILPVNLS. Residues 168–191 lie on the Extracellular side of the membrane; sequence GDLLDKDPYSFGRTTIANLQTDND. A helical transmembrane segment spans residues 192–217; that stretch reads LLWLHTIFAVIYLFLTVGFMRHHTQS. Residues 218–416 are Cytoplasmic-facing; it reads IKYKEENLVR…CWKNLSIQGL (199 aa). The intracellular linker IL2; confers mechanosensitivity stretch occupies residues 219 to 414; that stretch reads KYKEENLVRR…DICWKNLSIQ (196 aa). Residues 417–444 form a helical membrane-spanning segment; that stretch reads RWWLQWLGINFTLFLGLFFLTTPSIILS. Over 445 to 462 the chain is Extracellular; the sequence is TMDKFNVTKPIHALNNPI. N-linked (GlcNAc...) asparagine glycosylation occurs at N450. A helical transmembrane segment spans residues 463–490; sequence ISQFFPTLLLWSFSALLPSIVYYSTLLE. The Cytoplasmic segment spans residues 491-495; that stretch reads SHWTK. The chain crosses the membrane as a helical span at residues 496–532; that stretch reads SGENQIMMTKVYIFLIFMVLILPSLGLTSLDFFFRWL. At 533 to 554 the chain is on the extracellular side; that stretch reads FDKTSSEASIRLECVFLPDQGA. The helical transmembrane segment at 555-586 threads the bilayer; the sequence is FFVNYVIASAFIGNGMELLRLPGLILYTFRMI. Residues 555–586 form a gating helix region; the sequence is FFVNYVIASAFIGNGMELLRLPGLILYTFRMI. The Cytoplasmic portion of the chain corresponds to 587–606; it reads MAKTAADRRNVKQNQAFQYE. A helical transmembrane segment spans residues 607–624; it reads FGAMYAWMLCVFTVIVAY. Residues 625 to 628 lie on the Extracellular side of the membrane; the sequence is SITC. A helical membrane pass occupies residues 629-651; that stretch reads PIIAPFGLIYILLKHMVDRHNLY. Residues 652-661 are Cytoplasmic-facing; the sequence is FVYLPAKLEK. A helical membrane pass occupies residues 662 to 689; sequence GIHFAAVNQALAAPILCLFWLYFFSFLR. Residues 690 to 694 are Extracellular-facing; sequence LGMKA. The helical transmembrane segment at 695 to 709 threads the bilayer; sequence PATLFTFLVLLLTIL. Over 710–807 the chain is Cytoplasmic; that stretch reads VCLAHTCFGC…GSVAAAPQEA (98 aa). Residue S739 is modified to Phosphoserine.

It belongs to the CSC1 (TC 1.A.17) family. As to quaternary structure, monomer. N-Glycosylated.

Its subcellular location is the lysosome membrane. It localises to the early endosome membrane. It is found in the cell membrane. It catalyses the reaction Ca(2+)(in) = Ca(2+)(out). In terms of biological role, mechanosensitive cation channel with low conductance and high activation threshold. In contrast to TMEM63B, does not show phospholipid scramblase activity. Acts as a regulator of lysosomal morphology by mediating lysosomal mechanosensitivity. Important for the baby's first breath and respiration throughout life. Upon lung inflation conducts cation currents in alveolar type 1 and 2 cells triggering lamellar body exocytosis and surfactant secretion into airspace. Also acts as an osmosensitive cation channel preferentially activated by hypotonic stress. The protein is Mechanosensitive cation channel TMEM63A of Homo sapiens (Human).